A 485-amino-acid polypeptide reads, in one-letter code: Pumilio domain-containing protein 6 (485 aa).

2 disordered regions span residues 29–48 (NKTHKNKNPKPPVKLLPYRH) and 55–76 (SDLDNYIFNSGSGSSDDETPPP). Residues 55 to 68 (SDLDNYIFNSGSGS) show a composition bias toward polar residues. Pumilio repeat units lie at residues 86-124 (EVLLNGLLIDFAIDPSGVKFLEANYPLDSEDQIRKAVFE), 125-163 (KLTESTTLFVGLCHSRNGNFIVQKLVELATPAEQRELLR), 164-200 (QMIDGGLLVMCKDKFACRVVQLALQKFDHSNVFQLIQ), 201-236 (ELSTFDLAAMCTDQISIHVIQRVVKQLPVDMWTFFV), 237-279 (HFLS…FRIQ), 287-324 (CIVRNCYRLSSNEFANYVIQYVIKSSGIMEMYRDTIID), 326-361 (CLLRNLLSMSQDKYASHVIEGAFLFAPPALLHEMME), and 372-411 (ELNRDALDILLFHQYGNYVVQQMISICTAALIGKEERQLP). The tract at residues 439–454 (FSSGKKIIDSVMRHGV) is RNA-binding.

Its function is as follows. RNA-binding protein that binds to the consensus sequence 5'-CUCUGUAUCUUGU-3' in mRNA 3'-UTRs and modulates mRNA expression and stability. Functions redundantly with puf-5 and puf-7 in oocyte formation and organization, early embryonic cell divisions, and repression of expression of glp-1 and other maternal mRNAs in late oogenesis. The chain is Pumilio domain-containing protein 6 from Caenorhabditis elegans.